The sequence spans 375 residues: Probable G-protein coupled receptor 34 (375 aa).

Residues 1–54 are Extracellular-facing; that stretch reads MTTTSVDSWLCSSHGMHFITNYSDQASQNFSGVPNVTSCPMDEKLLSTVLTTFY. 3 N-linked (GlcNAc...) asparagine glycosylation sites follow: Asn21, Asn29, and Asn35. The helical transmembrane segment at 55-75 threads the bilayer; the sequence is SVIFLVGLVGNIIALYVFLGI. Over 76–81 the chain is Cytoplasmic; the sequence is HRKRNS. Residues 82 to 102 form a helical membrane-spanning segment; the sequence is IQIYLLNVAVADLLLIFCLPF. The Extracellular portion of the chain corresponds to 103 to 121; the sequence is RIMYHINQNKWTLGVILCK. The cysteines at positions 120 and 197 are disulfide-linked. A helical membrane pass occupies residues 122–142; sequence VVGTLFYMNMYISIILLGFIS. Residues 143–164 lie on the Cytoplasmic side of the membrane; the sequence is LDRYIKINRSIQQRRAITTKQS. The helical transmembrane segment at 165–185 threads the bilayer; that stretch reads IYVCCIVWTVALAGFLTMIIL. At 186–209 the chain is on the extracellular side; that stretch reads TLKKGGHNSTMCFHYRDRHNAKGE. Asn193 carries N-linked (GlcNAc...) asparagine glycosylation. Residues 210 to 230 form a helical membrane-spanning segment; that stretch reads AIFNFVLVVMFWLIFLLIILS. Residues 231–262 are Cytoplasmic-facing; sequence YIKIGKNLLRISKRRSKFPNSGKYATTARNSF. Residues 263 to 283 form a helical membrane-spanning segment; sequence IVLIIFTICFVPYHAFRFIYI. The Extracellular portion of the chain corresponds to 284 to 303; that stretch reads SSQLNVSSCYWKEIIHKTNE. N-linked (GlcNAc...) asparagine glycosylation occurs at Asn288. The helical transmembrane segment at 304 to 324 threads the bilayer; sequence IMLVFSSFNSCLDPVMYFLMS. At 325–375 the chain is on the cytoplasmic side; it reads SNIRKIMCQLLFRRFQSEASRSESTSEFKPGHSLHDLSVTVKMPQYSTKGN.

The protein belongs to the G-protein coupled receptor 1 family. In terms of tissue distribution, highly expressed in glial cells such as astrocytes and microglia.

The protein localises to the cell membrane. G-protein-coupled receptor of lysophosphatidylserine (LysoPS) that plays different roles in immune response. Acts a damage-sensing receptor that triggers tissue repair upon recognition of dying neutrophils. Mechanistically, apoptotic neutrophils release lysophosphatydilserine that are recognized by type 3 innate lymphoid cells (ILC3s) via GPR34, which activates downstream PI3K-AKT and RAS-ERK signaling pathways leading to STAT3 activation and IL-22 production. Plays an important role in microglial function, controlling morphology and phagocytosis. The chain is Probable G-protein coupled receptor 34 (Gpr34) from Mus musculus (Mouse).